The sequence spans 304 residues: Non-specific ribonucleoside hydrolase RihC (304 aa).

His-233 is an active-site residue.

The protein belongs to the IUNH family. RihC subfamily.

In terms of biological role, hydrolyzes both purine and pyrimidine ribonucleosides with a broad-substrate specificity. In Shigella dysenteriae serotype 1 (strain Sd197), this protein is Non-specific ribonucleoside hydrolase RihC.